Reading from the N-terminus, the 346-residue chain is Large ribosomal subunit protein uL3 (346 aa).

The interval 324–346 is disordered; the sequence is RPPKKKPPVERPQITYVSRESKQ.

Belongs to the universal ribosomal protein uL3 family. Part of the 50S ribosomal subunit. Forms a cluster with proteins L14 and L24e.

Functionally, one of the primary rRNA binding proteins, it binds directly near the 3'-end of the 23S rRNA, where it nucleates assembly of the 50S subunit. The polypeptide is Large ribosomal subunit protein uL3 (Thermococcus kodakarensis (strain ATCC BAA-918 / JCM 12380 / KOD1) (Pyrococcus kodakaraensis (strain KOD1))).